The chain runs to 423 residues: UDP-N-acetylglucosamine 1-carboxyvinyltransferase (423 aa).

22–23 (KN) is a phosphoenolpyruvate binding site. Arg-93 provides a ligand contact to UDP-N-acetyl-alpha-D-glucosamine. Catalysis depends on Cys-117, which acts as the Proton donor. A 2-(S-cysteinyl)pyruvic acid O-phosphothioketal modification is found at Cys-117. UDP-N-acetyl-alpha-D-glucosamine contacts are provided by residues 122-126 (RPVDL), Asp-308, and Ile-330.

It belongs to the EPSP synthase family. MurA subfamily.

Its subcellular location is the cytoplasm. It carries out the reaction phosphoenolpyruvate + UDP-N-acetyl-alpha-D-glucosamine = UDP-N-acetyl-3-O-(1-carboxyvinyl)-alpha-D-glucosamine + phosphate. It participates in cell wall biogenesis; peptidoglycan biosynthesis. Functionally, cell wall formation. Adds enolpyruvyl to UDP-N-acetylglucosamine. In Maricaulis maris (strain MCS10) (Caulobacter maris), this protein is UDP-N-acetylglucosamine 1-carboxyvinyltransferase.